A 416-amino-acid chain; its full sequence is Esterase FrsA (416 aa).

Residues 19–39 (ETSTLVRRTRHDQETQGLHST) form a disordered region.

This sequence belongs to the FrsA family.

The enzyme catalyses a carboxylic ester + H2O = an alcohol + a carboxylate + H(+). Functionally, catalyzes the hydrolysis of esters. In Pectobacterium atrosepticum (strain SCRI 1043 / ATCC BAA-672) (Erwinia carotovora subsp. atroseptica), this protein is Esterase FrsA.